The primary structure comprises 235 residues: Large ribosomal subunit protein uL1 (235 aa).

It belongs to the universal ribosomal protein uL1 family. Part of the 50S ribosomal subunit.

In terms of biological role, binds directly to 23S rRNA. The L1 stalk is quite mobile in the ribosome, and is involved in E site tRNA release. Its function is as follows. Protein L1 is also a translational repressor protein, it controls the translation of the L11 operon by binding to its mRNA. The chain is Large ribosomal subunit protein uL1 from Mycobacterium bovis (strain ATCC BAA-935 / AF2122/97).